The following is a 422-amino-acid chain: Adhesin YadA (422 aa).

An N-terminal signal peptide occupies residues 1 to 25; the sequence is MTKDFKISVSAALISALFSSPYAFA. Residues 26-330 are surface exposed passenger domain; that stretch reads NNDEVHFTAV…KKAIRESNQY (305 aa). Positions 206–236 form a coiled coil; sequence VNVAQLKKEIEKTQVNANKKSAEVLGIANNY. The tract at residues 331-368 is outer membrane translocation of the passenger domain; that stretch reads TDHKFRQLDNRLDKLDTRVDKGLASSAALNSLFQPYGV. 4 consecutive transmembrane segments (beta stranded) span residues 369–379, 383–394, 401–407, and 411–422; these read GKVNFTAGVGG, SQALAIGSGYRV, KAGVAYA, and DVMYNASFNIEW. Residues 369–422 form a translocator domain region; it reads GKVNFTAGVGGYRSSQALAIGSGYRVNESVALKAGVAYAGSSDVMYNASFNIEW.

The protein belongs to the autotransporter-2 (AT-2) (TC 1.B.40) family. Homotrimer; trimers are very stable, not disrupted by heating at 95 degrees Celsius for 10 minutes in SDS sample buffer.

It is found in the cell surface. The protein resides in the cell outer membrane. In terms of biological role, collagen-binding outer membrane protein forming a fibrillar matrix on the bacterial cell surface and phagocytosis resistance. Promotes initial attachment and invasion of eukaryotic cells. Also protects the bacteria by being responsible for agglutination, serum resistance and complement inactivation. Gly-389 plays an important role in this protein; replacing it with increasingly large polar residues decreases expression levels and trimer stability. Residues larger than Ser (Thr, Asn or His) significantly decrease serume resistance and bacterial autoagglution without affecting adhesion to host cells or host cell cytokine production. The chain is Adhesin YadA from Yersinia enterocolitica serotype O:8 / biotype 1B (strain NCTC 13174 / 8081).